The primary structure comprises 1047 residues: MPRHSSTMSRLVLPLIFSILLVSKPSPSQAQDESLAGSFLSGLLDTITSTADSKDCPGVCVHTLATLICYEVLDDVACPSPSMKCCIENAPAGKNATAVRATTTPKTTTTASTTTTQRTTTTVATTSTTKRTTTTSTTPKPKPKPQTKRPATSSTTKATVATTKKPSTTKKVATAKPKDKEEATKADDANKDCTGVCVADRIAEYCEAYLTSDGLCKEGTKCCVSLDEYSNGKLPKDIYIPAKHMSNLKPNQTLSEKSAPAKSSSTSTTSTTTTTSTTTTPEPARINNSSPKPTKHKKHPTTTTTEAAEEEEEQETEEDGEEEEPPLSNKLKSGQGQGQVLKECEGECMNGIFAIFCDDIDSDAFCPGEESCCVTGGASEATPSSKAPPTKPAIKHAPKPAAKPARPASPPPAPPSSTSGGGGGGDFLSQIISFAESTLNSPSPPPPPPQAPIQVPRCPGFCLLNIMAAFCERPSVLVSTPTTCAKGSVCCDNSRAGAPKPKLPPPTPSPTASPTAPPYVLPNTPSPDPREECPGSCIVSLLSFTCFKNAEMTDLFRCKRSGQICCAPKSKILEKQQFQTRNDTAYYPAPPPPPIGPPQAYPPQTPPYSYMNNPPPQGPPPQMAPHHPNPYQPPPPAPNYADYYPVSGPGLPPQPQPPMTTPPTTTTTTTTPRPHVYSKYVCGVKGTLRTGRSQALSFVSYARAKYGVQRTARQMTSAAGYSPNFNKSNERLVLGSAIVPIQIHNDKLGDLVESSSLQSNQLRSYHNHQAQADQPDLVYPEYYQQRSLYGLQSNFSGRRRARVVGGEDGENGEWCWQVALINSLNQYLCGAALIGTQWVLTAAHCVTNIVRSGDAIYVRVGDYDLTRKYGSPGAQTLRVATTYIHHNHNSQTLDNDIALLKLHGQAELRDGVCLVCLPARGVSHAAGKRCTVTGYGYMGEAGPIPLRVREAEIPIVSDTECIRKVNAVTEKIFILPASSFCAGGEEGHDACQGDGGGPLVCQDDGFYELAGLVSWGFGCGRQDVPGVYVKTSSFIGWINQIISVNNL.

The N-terminal stretch at 1 to 30 (MPRHSSTMSRLVLPLIFSILLVSKPSPSQA) is a signal peptide. The segment at 54-87 (KDCPGVCVHTLATLICYEVLDDVACPSPSMKCCI) is CLIP 1. 3 cysteine pairs are disulfide-bonded: cysteine 56-cysteine 85, cysteine 60-cysteine 78, and cysteine 69-cysteine 86. An N-linked (GlcNAc...) asparagine glycan is attached at asparagine 95. Composition is skewed to low complexity over residues 98–139 (AVRA…STTP) and 148–175 (KRPA…VATA). Residues 98–189 (AVRATTTPKT…KEEATKADDA (92 aa)) form a disordered region. The span at 176–189 (KPKDKEEATKADDA) shows a compositional bias: basic and acidic residues. Residues 192–224 (DCTGVCVADRIAEYCEAYLTSDGLCKEGTKCCV) are CLIP 2. Intrachain disulfides connect cysteine 193–cysteine 222, cysteine 197–cysteine 216, and cysteine 206–cysteine 223. An N-linked (GlcNAc...) asparagine glycan is attached at asparagine 251. The disordered stretch occupies residues 252 to 335 (QTLSEKSAPA…PLSNKLKSGQ (84 aa)). Low complexity predominate over residues 263–280 (SSSTSTTSTTTTTSTTTT). N-linked (GlcNAc...) asparagine glycosylation is present at asparagine 287. The segment covering 307–325 (AAEEEEEQETEEDGEEEEP) has biased composition (acidic residues). Residues 343-374 (ECEGECMNGIFAIFCDDIDSDAFCPGEESCCV) are CLIP 3. 3 cysteine pairs are disulfide-bonded: cysteine 344–cysteine 372, cysteine 348–cysteine 366, and cysteine 357–cysteine 373. A disordered region spans residues 376–428 (GGASEATPSSKAPPTKPAIKHAPKPAAKPARPASPPPAPPSSTSGGGGGGDFL). The tract at residues 457–492 (RCPGFCLLNIMAAFCERPSVLVSTPTTCAKGSVCCD) is CLIP 4. Intrachain disulfides connect cysteine 458/cysteine 490, cysteine 462/cysteine 484, and cysteine 471/cysteine 491. The disordered stretch occupies residues 498-527 (APKPKLPPPTPSPTASPTAPPYVLPNTPSP). Positions 501-527 (PKLPPPTPSPTASPTAPPYVLPNTPSP) are enriched in pro residues. Residues 532–567 (ECPGSCIVSLLSFTCFKNAEMTDLFRCKRSGQICCA) form a CLIP 5 region. 3 disulfides stabilise this stretch: cysteine 533/cysteine 565, cysteine 537/cysteine 558, and cysteine 546/cysteine 566. Asparagine 582 carries an N-linked (GlcNAc...) asparagine glycan. Residues 583–673 (DTAYYPAPPP…TTTTTTTTPR (91 aa)) form a disordered region. 3 stretches are compositionally biased toward pro residues: residues 588–606 (PAPP…PQTP), 613–638 (NPPP…PPAP), and 650–661 (GLPPQPQPPMTT). Positions 662 to 672 (PPTTTTTTTTP) are enriched in low complexity. 5 disulfides stabilise this stretch: cysteine 682-cysteine 916, cysteine 829-cysteine 845, cysteine 930-cysteine 1001, cysteine 961-cysteine 981, and cysteine 991-cysteine 1019. N-linked (GlcNAc...) asparagine glycans are attached at residues asparagine 726 and asparagine 794. The interval 803 to 1043 (VVGGEDGENG…FIGWINQIIS (241 aa)) is peptidase S1.

The protein belongs to the peptidase S1 family. CLIP subfamily. Post-translationally, proteolytically cleaved and thereafter secreted.

The protein resides in the secreted. It is found in the cell projection. Its subcellular location is the axon. In embryogenesis, has a role in somatic muscle attachment and in the development of axonal pathways probably by stabilizing cell-matrix adhesion and/or by acting as a competitive antagonist of serine proteases. The polypeptide is Protein masquerade (Drosophila melanogaster (Fruit fly)).